A 505-amino-acid polypeptide reads, in one-letter code: Flagellin (505 aa).

This sequence belongs to the bacterial flagellin family.

Its subcellular location is the secreted. It localises to the bacterial flagellum. Its function is as follows. Flagellin is the subunit protein which polymerizes to form the filaments of bacterial flagella. The polypeptide is Flagellin (fliC) (Salmonella enteritidis).